The sequence spans 930 residues: Translation initiation factor IF-2 (930 aa).

The span at 50–67 (FKPAAAPKVEAKPAAPKV) shows a compositional bias: low complexity. 2 disordered regions span residues 50-217 (FKPA…SSEE) and 260-346 (EVVP…HELP). Composition is skewed to basic and acidic residues over residues 68-90 (SAEKKAEKSEPAKPAVAKEEAKP) and 110-125 (FKAEREARAKEQAERR). Positions 129-141 (KGNNRDQQQNGNR) are enriched in low complexity. Basic and acidic residues-rich tracts occupy residues 157 to 167 (RDNRRFNDQAK) and 262 to 295 (VPEKKEPAVDTRRKKQARPDKNRDDYDHEEDGPR). Residues 309–318 (NQKNSNWNNN) are compositionally biased toward low complexity. Residues 337-346 (VTERKFHELP) show a composition bias toward basic and acidic residues. In terms of domain architecture, tr-type G spans 432–599 (ERPPVVTIMG…TVLLVAEIQE (168 aa)). The tract at residues 441–448 (GHVDHGKT) is G1. 441–448 (GHVDHGKT) is a binding site for GTP. Residues 466 to 470 (GITQH) are G2. A G3 region spans residues 487–490 (DTPG). GTP is bound by residues 487 to 491 (DTPGH) and 541 to 544 (NKID). The G4 stretch occupies residues 541 to 544 (NKID). The segment at 577–579 (SAK) is G5.

The protein belongs to the TRAFAC class translation factor GTPase superfamily. Classic translation factor GTPase family. IF-2 subfamily.

The protein resides in the cytoplasm. One of the essential components for the initiation of protein synthesis. Protects formylmethionyl-tRNA from spontaneous hydrolysis and promotes its binding to the 30S ribosomal subunits. Also involved in the hydrolysis of GTP during the formation of the 70S ribosomal complex. This chain is Translation initiation factor IF-2, found in Streptococcus pneumoniae (strain P1031).